We begin with the raw amino-acid sequence, 576 residues long: Probable metalloreductase AIM14 (576 aa).

Transmembrane regions (helical) follow at residues 21–41 (IKYG…LALL), 70–90 (AIHL…HYSL), 101–118 (LGRL…LTLR), 142–162 (IITV…AIDD), 177–197 (FVGF…IGPM), 204–224 (LFYI…PIHS), and 230–250 (FPFL…RIVF). The Ferric oxidoreductase domain maps to 101-219 (LGRLSYALIP…NLVNVAFILL (119 aa)). The FAD-binding FR-type domain maps to 250-388 (FAKSLMILNK…GGSGISFALP (139 aa)). A compositionally biased stretch (polar residues) spans 480–505 (ISNFNSENADSNDNTPETSHSPTKEN). Positions 480 to 507 (ISNFNSENADSNDNTPETSHSPTKENGS) are disordered.

This sequence belongs to the ferric reductase (FRE) family. AIM14 subfamily. As to quaternary structure, interacts with ribosomes.

It localises to the membrane. Probable cell surface metalloreductase. May be involved in iron or copper homeostasis. The sequence is that of Probable metalloreductase AIM14 (AIM14) from Saccharomyces cerevisiae (strain Lalvin EC1118 / Prise de mousse) (Baker's yeast).